Reading from the N-terminus, the 179-residue chain is Negative modulator of initiation of replication (179 aa).

Belongs to the SeqA family. As to quaternary structure, homodimer. Polymerizes to form helical filaments.

The protein localises to the cytoplasm. Functionally, negative regulator of replication initiation, which contributes to regulation of DNA replication and ensures that replication initiation occurs exactly once per chromosome per cell cycle. Binds to pairs of hemimethylated GATC sequences in the oriC region, thus preventing assembly of replication proteins and re-initiation at newly replicated origins. Repression is relieved when the region becomes fully methylated. The sequence is that of Negative modulator of initiation of replication from Vibrio atlanticus (strain LGP32) (Vibrio splendidus (strain Mel32)).